The sequence spans 1028 residues: Beta-galactosidase (1028 aa).

Residues Asn104 and Asp203 each contribute to the substrate site. Asp203 contacts Na(+). Positions 418, 420, and 463 each coordinate Mg(2+). Substrate contacts are provided by residues Glu463 and 539 to 542 (EYAH). The active-site Proton donor is the Glu463. Glu539 (nucleophile) is an active-site residue. A Mg(2+)-binding site is contributed by Asn599. Na(+) is bound by residues Phe603 and Asn606. Substrate is bound by residues Asn606 and Trp1004.

This sequence belongs to the glycosyl hydrolase 2 family. Homotetramer. Mg(2+) is required as a cofactor. It depends on Na(+) as a cofactor.

It carries out the reaction Hydrolysis of terminal non-reducing beta-D-galactose residues in beta-D-galactosides.. The chain is Beta-galactosidase from Enterobacter sp. (strain 638).